The chain runs to 203 residues: MGEEVSIGATAVGIKTKEGVVLAAEKRVSYGFYTLSTAGKKVFIVNDRLAIASAGIIADMQTLAKILKLNAKAYELEMKRKPSVHAMAKLLSVVMFSRRFMPFFAEVLVGGIDDEGPHLIVMDPLGSLIEDNYAALGTGAKLAIAIIDASYKPDMSLQDAKKLAVQALKAALERDPVSGGGIDLVVIDKNGAREEEVKLQVLI.

The propeptide at 1 to 9 (MGEEVSIGA) is removed in mature form; by autocatalysis. T10 functions as the Nucleophile in the catalytic mechanism.

It belongs to the peptidase T1B family. In terms of assembly, the 20S proteasome core is composed of 14 alpha and 14 beta subunits that assemble into four stacked heptameric rings, resulting in a barrel-shaped structure. The two inner rings, each composed of seven catalytic beta subunits, are sandwiched by two outer rings, each composed of seven alpha subunits. The catalytic chamber with the active sites is on the inside of the barrel. Has a gated structure, the ends of the cylinder being occluded by the N-termini of the alpha-subunits. Is capped at one or both ends by the proteasome regulatory ATPase, PAN.

It is found in the cytoplasm. The enzyme catalyses Cleavage of peptide bonds with very broad specificity.. With respect to regulation, the formation of the proteasomal ATPase PAN-20S proteasome complex, via the docking of the C-termini of PAN into the intersubunit pockets in the alpha-rings, triggers opening of the gate for substrate entry. Interconversion between the open-gate and close-gate conformations leads to a dynamic regulation of the 20S proteasome proteolysis activity. In terms of biological role, component of the proteasome core, a large protease complex with broad specificity involved in protein degradation. In Pyrobaculum calidifontis (strain DSM 21063 / JCM 11548 / VA1), this protein is Proteasome subunit beta 2.